The sequence spans 383 residues: Acetylornithine deacetylase (383 aa).

His80 contacts Zn(2+). Asp82 is an active-site residue. A Zn(2+)-binding site is contributed by Asp112. Glu144 is an active-site residue. Positions 145, 169, and 355 each coordinate Zn(2+).

It belongs to the peptidase M20A family. ArgE subfamily. In terms of assembly, homodimer. Zn(2+) serves as cofactor. It depends on Co(2+) as a cofactor. The cofactor is glutathione.

It localises to the cytoplasm. It catalyses the reaction N(2)-acetyl-L-ornithine + H2O = L-ornithine + acetate. It functions in the pathway amino-acid biosynthesis; L-arginine biosynthesis; L-ornithine from N(2)-acetyl-L-ornithine (linear): step 1/1. In terms of biological role, catalyzes the hydrolysis of the amide bond of N(2)-acetylated L-amino acids. Cleaves the acetyl group from N-acetyl-L-ornithine to form L-ornithine, an intermediate in L-arginine biosynthesis pathway, and a branchpoint in the synthesis of polyamines. In Salmonella choleraesuis (strain SC-B67), this protein is Acetylornithine deacetylase.